The sequence spans 388 residues: Succinate--CoA ligase [ADP-forming] subunit beta (388 aa).

An ATP-grasp domain is found at 9–244 (KSLFAEYGLP…PSQDDAREAH (236 aa)). Residues K46, 53–55 (GRG), E99, T102, and E107 contribute to the ATP site. Residues N199 and D213 each contribute to the Mg(2+) site. Substrate is bound by residues N264 and 321–323 (GIV).

Belongs to the succinate/malate CoA ligase beta subunit family. As to quaternary structure, heterotetramer of two alpha and two beta subunits. Requires Mg(2+) as cofactor.

The catalysed reaction is succinate + ATP + CoA = succinyl-CoA + ADP + phosphate. It catalyses the reaction GTP + succinate + CoA = succinyl-CoA + GDP + phosphate. The protein operates within carbohydrate metabolism; tricarboxylic acid cycle; succinate from succinyl-CoA (ligase route): step 1/1. Succinyl-CoA synthetase functions in the citric acid cycle (TCA), coupling the hydrolysis of succinyl-CoA to the synthesis of either ATP or GTP and thus represents the only step of substrate-level phosphorylation in the TCA. The beta subunit provides nucleotide specificity of the enzyme and binds the substrate succinate, while the binding sites for coenzyme A and phosphate are found in the alpha subunit. In Shewanella woodyi (strain ATCC 51908 / MS32), this protein is Succinate--CoA ligase [ADP-forming] subunit beta.